The sequence spans 377 residues: DNA replication and repair protein RecF (377 aa).

30–37 (GQNAQGKS) provides a ligand contact to ATP.

This sequence belongs to the RecF family.

Its subcellular location is the cytoplasm. Its function is as follows. The RecF protein is involved in DNA metabolism; it is required for DNA replication and normal SOS inducibility. RecF binds preferentially to single-stranded, linear DNA. It also seems to bind ATP. The polypeptide is DNA replication and repair protein RecF (Cyanothece sp. (strain PCC 7425 / ATCC 29141)).